Reading from the N-terminus, the 219-residue chain is Cytidylate kinase (219 aa).

21 to 29 (GPAASGKGT) lines the ATP pocket.

Belongs to the cytidylate kinase family. Type 1 subfamily.

It is found in the cytoplasm. It catalyses the reaction CMP + ATP = CDP + ADP. The enzyme catalyses dCMP + ATP = dCDP + ADP. This is Cytidylate kinase from Rickettsia felis (strain ATCC VR-1525 / URRWXCal2) (Rickettsia azadi).